The sequence spans 357 residues: Aminomethyltransferase (357 aa).

Belongs to the GcvT family. As to quaternary structure, the glycine cleavage system is composed of four proteins: P, T, L and H.

It catalyses the reaction N(6)-[(R)-S(8)-aminomethyldihydrolipoyl]-L-lysyl-[protein] + (6S)-5,6,7,8-tetrahydrofolate = N(6)-[(R)-dihydrolipoyl]-L-lysyl-[protein] + (6R)-5,10-methylene-5,6,7,8-tetrahydrofolate + NH4(+). The glycine cleavage system catalyzes the degradation of glycine. This chain is Aminomethyltransferase, found in Deinococcus deserti (strain DSM 17065 / CIP 109153 / LMG 22923 / VCD115).